Reading from the N-terminus, the 64-residue chain is UPF0370 protein YPA_2246 (64 aa).

Residues 3–23 form a helical membrane-spanning segment; it reads WLADYWWIILILLVGMILNGI. Residues 36 to 47 show a composition bias toward basic and acidic residues; that stretch reads DNKPELPPHRDN. Residues 36-64 are disordered; it reads DNKPELPPHRDNNAQWDDEDDWPDQNKKK.

It belongs to the UPF0370 family.

It localises to the cell membrane. This Yersinia pestis bv. Antiqua (strain Antiqua) protein is UPF0370 protein YPA_2246.